A 1233-amino-acid chain; its full sequence is Glutamate receptor ionotropic, NMDA 2C (1233 aa).

An N-terminal signal peptide occupies residues 1–19 (MGGALGPALLLTSLFGAWA). Topologically, residues 20–554 (GLGPGQGEQG…SAFLEPYSPA (535 aa)) are extracellular. Residues Asn70 and Asn73 are each glycosylated (N-linked (GlcNAc...) asparagine). Residues Cys82 and Cys317 are joined by a disulfide bond. Residues Asn337 and Asn438 are each glycosylated (N-linked (GlcNAc...) asparagine). Intrachain disulfides connect Cys426/Cys453 and Cys433/Cys454. L-glutamate contacts are provided by Ser509, Thr511, and Arg516. A glycan (N-linked (GlcNAc...) asparagine) is linked at Asn539. Residues 555–575 (VWVMMFVMCLTVVAITVFMFE) form a helical membrane-spanning segment. Residues 576–598 (YFSPVSYNQNLTRGKKSGGPAFT) lie on the Cytoplasmic side of the membrane. The discontinuously helical intramembrane region spans 599–611 (IGKSVWLLWALVF). Positions 601–620 (KSVWLLWALVFNNSVPIENP) are pore-forming. The Cytoplasmic portion of the chain corresponds to 612-626 (NNSVPIENPRGTTSK). A helical membrane pass occupies residues 627–644 (IMVLVWAFFAVIFLASYT). At 645 to 813 (ANLAAFMIQE…EVMSSKLDID (169 aa)) the chain is on the extracellular side. The N-linked (GlcNAc...) asparagine glycan is linked to Asn685. 3 residues coordinate L-glutamate: Ser687, Thr688, and Asp729. Cys743 and Cys798 form a disulfide bridge. Residues 814–836 (NMAGVFYMLLVAMGLALLVFAWE) traverse the membrane as a helical segment. The Cytoplasmic segment spans residues 837-1233 (HLVYWKLRHS…RRISSLESEV (397 aa)). 3 positions are modified to phosphoserine: Ser875, Ser881, and Ser912. Residues 920-994 (IENWGGGRRA…GPPLSDVSRV (75 aa)) form a disordered region. Composition is skewed to pro residues over residues 929–956 (APPP…PEPS) and 975–987 (PQPP…PGPP). The PDZ-binding signature appears at 1231–1233 (SEV).

This sequence belongs to the glutamate-gated ion channel (TC 1.A.10.1) family. NR2C/GRIN2C subfamily. As to quaternary structure, heterotetramer. Forms heterotetrameric channels composed of two GluN1/zeta subunits (GRIN1), and two identical GluN2/epsilon subunits (GRIN2A, GRIN2B, GRIN2C or GRIN2D) or GluN3 subunits (GRIN3A or GRIN3B) (in vitro). In vivo, the subunit composition may depend on the expression levels of the different subunits. Interacts with PDZ domains of PATJ and DLG4. Interacts (via PDZ-binding motif) with SNX27 (via PDZ domain); the interaction is required for recycling to the plasma membrane when endocytosed and prevent degradation in lysosomes. As to expression, mainly expressed in brain with predominant expression is in the cerebellum, also present in the hippocampus, amygdala, caudate nucleus, corpus callosum, subthalamic nuclei and thalamus. Detected in the heart, skeletal muscle and pancreas.

The protein resides in the cell membrane. The protein localises to the postsynaptic cell membrane. The enzyme catalyses Ca(2+)(in) = Ca(2+)(out). The catalysed reaction is Na(+)(in) = Na(+)(out). It catalyses the reaction K(+)(in) = K(+)(out). Functionally, component of N-methyl-D-aspartate (NMDA) receptors (NMDARs) that function as heterotetrameric, ligand-gated cation channels with high calcium permeability and voltage-dependent block by Mg(2+). Participates in synaptic plasticity for learning and memory formation by contributing to the slow phase of excitatory postsynaptic current and long-term synaptic potentiation. Channel activation requires binding of the neurotransmitter L-glutamate to the GluN2 subunit, glycine or D-serine binding to the GluN1 subunit, plus membrane depolarization to eliminate channel inhibition by Mg(2+). NMDARs mediate simultaneously the potasium efflux and the influx of calcium and sodium. Each GluN2 subunit confers differential attributes to channel properties, including activation, deactivation and desensitization kinetics, pH sensitivity, Ca2(+) permeability, and binding to allosteric modulators. This is Glutamate receptor ionotropic, NMDA 2C from Homo sapiens (Human).